The sequence spans 276 residues: NADPH-dependent 7-cyano-7-deazaguanine reductase (276 aa).

Residue 83-85 (IES) coordinates substrate. Residue 85 to 86 (SK) coordinates NADPH. Cys-184 acts as the Thioimide intermediate in catalysis. Asp-191 (proton donor) is an active-site residue. 223–224 (HE) contributes to the substrate binding site. 252–253 (RG) contacts NADPH.

This sequence belongs to the GTP cyclohydrolase I family. QueF type 2 subfamily. In terms of assembly, homodimer.

The protein localises to the cytoplasm. It carries out the reaction 7-aminomethyl-7-carbaguanine + 2 NADP(+) = 7-cyano-7-deazaguanine + 2 NADPH + 3 H(+). The protein operates within tRNA modification; tRNA-queuosine biosynthesis. Catalyzes the NADPH-dependent reduction of 7-cyano-7-deazaguanine (preQ0) to 7-aminomethyl-7-deazaguanine (preQ1). In Pseudomonas putida (strain ATCC 47054 / DSM 6125 / CFBP 8728 / NCIMB 11950 / KT2440), this protein is NADPH-dependent 7-cyano-7-deazaguanine reductase.